A 204-amino-acid polypeptide reads, in one-letter code: Leucyl/phenylalanyl-tRNA--protein transferase (204 aa).

The protein belongs to the L/F-transferase family.

The protein resides in the cytoplasm. It carries out the reaction N-terminal L-lysyl-[protein] + L-leucyl-tRNA(Leu) = N-terminal L-leucyl-L-lysyl-[protein] + tRNA(Leu) + H(+). The enzyme catalyses N-terminal L-arginyl-[protein] + L-leucyl-tRNA(Leu) = N-terminal L-leucyl-L-arginyl-[protein] + tRNA(Leu) + H(+). The catalysed reaction is L-phenylalanyl-tRNA(Phe) + an N-terminal L-alpha-aminoacyl-[protein] = an N-terminal L-phenylalanyl-L-alpha-aminoacyl-[protein] + tRNA(Phe). Its function is as follows. Functions in the N-end rule pathway of protein degradation where it conjugates Leu, Phe and, less efficiently, Met from aminoacyl-tRNAs to the N-termini of proteins containing an N-terminal arginine or lysine. The chain is Leucyl/phenylalanyl-tRNA--protein transferase from Brucella abortus (strain 2308).